The following is a 574-amino-acid chain: Protein misato (574 aa).

The protein belongs to the misato family.

The protein localises to the mitochondrion. This Drosophila melanogaster (Fruit fly) protein is Protein misato (mst).